Reading from the N-terminus, the 139-residue chain is 6,7-dimethyl-8-ribityllumazine synthase (139 aa).

Residues Phe-11, 42-44, and 66-68 each bind 5-amino-6-(D-ribitylamino)uracil; these read ALE and VVI. 71–72 lines the (2S)-2-hydroxy-3-oxobutyl phosphate pocket; it reads ET. His-74 (proton donor) is an active-site residue. Asn-98 provides a ligand contact to 5-amino-6-(D-ribitylamino)uracil. Arg-112 serves as a coordination point for (2S)-2-hydroxy-3-oxobutyl phosphate.

The protein belongs to the DMRL synthase family.

The enzyme catalyses (2S)-2-hydroxy-3-oxobutyl phosphate + 5-amino-6-(D-ribitylamino)uracil = 6,7-dimethyl-8-(1-D-ribityl)lumazine + phosphate + 2 H2O + H(+). The protein operates within cofactor biosynthesis; riboflavin biosynthesis; riboflavin from 2-hydroxy-3-oxobutyl phosphate and 5-amino-6-(D-ribitylamino)uracil: step 1/2. Functionally, catalyzes the formation of 6,7-dimethyl-8-ribityllumazine by condensation of 5-amino-6-(D-ribitylamino)uracil with 3,4-dihydroxy-2-butanone 4-phosphate. This is the penultimate step in the biosynthesis of riboflavin. The chain is 6,7-dimethyl-8-ribityllumazine synthase from Novosphingobium aromaticivorans (strain ATCC 700278 / DSM 12444 / CCUG 56034 / CIP 105152 / NBRC 16084 / F199).